We begin with the raw amino-acid sequence, 64 residues long: Myotoxin-2 (64 aa).

The signal sequence occupies residues 1 to 21 (KILYLLFAFLFLAFLSEPGNA). A disulfide bond links C32 and C51.

It belongs to the crotamine-myotoxin family. Monomer. As to expression, expressed by the venom gland.

The protein resides in the secreted. Cationic peptide that possesses multiple functions. It acts as a cell-penetrating peptide (CPP), and as a potent voltage-gated potassium channel (Kv) inhibitor. It exhibits antimicrobial activities, hind limb paralysis, and severe muscle necrosis by a non-enzymatic mechanism. This chain is Myotoxin-2, found in Crotalus durissus terrificus (South American rattlesnake).